The chain runs to 514 residues: HTH-type transcriptional regulatory protein TyrR (514 aa).

The ACT domain maps to 2–72 (RLEVFCEDRL…GVTDVRTVPW (71 aa)). The region spanning 78 to 120 (EHLALSALLEALPEPVLSLDMKSKIEMANPASCQLFAHTQDRM) is the PAS domain. A Sigma-54 factor interaction domain is found at 206-428 (IIAVSAKMKH…VKNAIYRALT (223 aa)). ATP is bound by residues 234–241 (GNTGTGKD) and 290–299 (ANGGSVLLDE). The H-T-H motif DNA-binding region spans 482–502 (STRKLAKRLGVSHTAIANKLR).

Homodimer. In presence of tyrosine (or high concentrations of phenylalanine or tryptophan) and ATP, it self-associates to form an hexamer.

The protein resides in the cytoplasm. Its function is as follows. Dual transcriptional regulator of the TyrR regulon, which includes a number of genes coding for proteins involved in the biosynthesis or transport of the three aromatic amino acids, phenylalanine, tyrosine and tryptophan. These three aromatic amino acids act as effectors which bind to the TyrR protein to form an active regulatory protein. Acts by binding specifically to TyrR boxes in the promoter region of the target genes. The polypeptide is HTH-type transcriptional regulatory protein TyrR (Citrobacter braakii).